A 262-amino-acid polypeptide reads, in one-letter code: Phosphonates import ATP-binding protein PhnC (262 aa).

The ABC transporter domain maps to 5–253 (ICVEQLSKTF…RFDHLYRSIN (249 aa)). An ATP-binding site is contributed by 37–44 (GPSGSGKS).

This sequence belongs to the ABC transporter superfamily. Phosphonates importer (TC 3.A.1.9.1) family. In terms of assembly, the complex is composed of two ATP-binding proteins (PhnC), two transmembrane proteins (PhnE) and a solute-binding protein (PhnD).

It localises to the cell inner membrane. It carries out the reaction phosphonate(out) + ATP + H2O = phosphonate(in) + ADP + phosphate + H(+). In terms of biological role, part of the ABC transporter complex PhnCDE involved in phosphonates import. Responsible for energy coupling to the transport system. This is Phosphonates import ATP-binding protein PhnC from Escherichia coli O157:H7.